Reading from the N-terminus, the 142-residue chain is MTSVASEPLSSQKRWIVIYPAYIDKKKTAKQGRKISQILAVENPTSVEIHDVLAAVGFNPLLERTKCYPRDGERDFEVQGRVRVQLKNDDGTAKHEQKTRDEIFKMVAEMIPKLKTRQPGYTAPSVASSSAAAAGKKNKKKK.

Positions 115 to 142 are disordered; sequence KTRQPGYTAPSVASSSAAAAGKKNKKKK. The segment covering 123 to 135 has biased composition (low complexity); it reads APSVASSSAAAAG.

Belongs to the SRP19 family. As to quaternary structure, component of a signal recognition particle complex that consists of a 7SL RNA molecule of 300 nucleotides and six protein subunits: srpa-72, srpa-68, SRP54, F37F2.2/SRP19, F25G6.8/SRP14 and ZK512.4/SRP9.

Its subcellular location is the cytoplasm. It localises to the nucleus. It is found in the nucleolus. Functionally, component of the signal recognition particle (SRP) complex, a ribonucleoprotein complex that mediates the cotranslational targeting of secretory and membrane proteins to the endoplasmic reticulum (ER). Binds directly to 7SL RNA. Mediates binding of SRP54 to the SRP complex. This chain is Probable signal recognition particle 19 kDa protein, found in Caenorhabditis elegans.